The primary structure comprises 38 residues: Spheniscin-1 (38 aa).

Cystine bridges form between Cys-5/Cys-33, Cys-12/Cys-27, and Cys-17/Cys-34.

As to quaternary structure, monomer. Secreted into the stomach cavity.

It localises to the secreted. Its function is as follows. Has antifungal activity and antibacterial activity against Gram-positive and Gram-negative bacteria. Involved in the process of food preservation in the stomach during the incubation fast. May also be present during infection. This Aptenodytes patagonicus (King penguin) protein is Spheniscin-1.